The following is a 616-amino-acid chain: Dihydroxy-acid dehydratase (616 aa).

Residue aspartate 81 coordinates Mg(2+). Cysteine 122 serves as a coordination point for [2Fe-2S] cluster. Mg(2+)-binding residues include aspartate 123 and lysine 124. N6-carboxylysine is present on lysine 124. Cysteine 195 lines the [2Fe-2S] cluster pocket. Glutamate 491 is a binding site for Mg(2+). Serine 517 acts as the Proton acceptor in catalysis.

The protein belongs to the IlvD/Edd family. As to quaternary structure, homodimer. [2Fe-2S] cluster is required as a cofactor. Requires Mg(2+) as cofactor.

The catalysed reaction is (2R)-2,3-dihydroxy-3-methylbutanoate = 3-methyl-2-oxobutanoate + H2O. It catalyses the reaction (2R,3R)-2,3-dihydroxy-3-methylpentanoate = (S)-3-methyl-2-oxopentanoate + H2O. The protein operates within amino-acid biosynthesis; L-isoleucine biosynthesis; L-isoleucine from 2-oxobutanoate: step 3/4. Its pathway is amino-acid biosynthesis; L-valine biosynthesis; L-valine from pyruvate: step 3/4. Functionally, functions in the biosynthesis of branched-chain amino acids. Catalyzes the dehydration of (2R,3R)-2,3-dihydroxy-3-methylpentanoate (2,3-dihydroxy-3-methylvalerate) into 2-oxo-3-methylpentanoate (2-oxo-3-methylvalerate) and of (2R)-2,3-dihydroxy-3-methylbutanoate (2,3-dihydroxyisovalerate) into 2-oxo-3-methylbutanoate (2-oxoisovalerate), the penultimate precursor to L-isoleucine and L-valine, respectively. The polypeptide is Dihydroxy-acid dehydratase (Methylocella silvestris (strain DSM 15510 / CIP 108128 / LMG 27833 / NCIMB 13906 / BL2)).